The sequence spans 289 residues: Phosphate import ATP-binding protein PstB 2 (289 aa).

Positions Leu-37–Thr-276 constitute an ABC transporter domain. Gly-69–Ser-76 provides a ligand contact to ATP.

It belongs to the ABC transporter superfamily. Phosphate importer (TC 3.A.1.7) family. The complex is composed of two ATP-binding proteins (PstB), two transmembrane proteins (PstC and PstA) and a solute-binding protein (PstS).

Its subcellular location is the cell inner membrane. It carries out the reaction phosphate(out) + ATP + H2O = ADP + 2 phosphate(in) + H(+). Its function is as follows. Part of the ABC transporter complex PstSACB involved in phosphate import. Responsible for energy coupling to the transport system. This is Phosphate import ATP-binding protein PstB 2 from Trichormus variabilis (strain ATCC 29413 / PCC 7937) (Anabaena variabilis).